The sequence spans 142 residues: MKTFSAKPAEVKRDWYVIDATDKVLGRVASEVARRLRGKHKPEFTPHVDTGDFIIIVNAAKLRVTGTKEQDKKYYRHSGYPGGIYETTFGKMQQRFPGRALEKAVKGMLPKGPLGYAMIKKLKVYAEAEHPHSAQQPKVLEI.

The protein belongs to the universal ribosomal protein uL13 family. As to quaternary structure, part of the 50S ribosomal subunit.

Its function is as follows. This protein is one of the early assembly proteins of the 50S ribosomal subunit, although it is not seen to bind rRNA by itself. It is important during the early stages of 50S assembly. The protein is Large ribosomal subunit protein uL13 of Cupriavidus metallidurans (strain ATCC 43123 / DSM 2839 / NBRC 102507 / CH34) (Ralstonia metallidurans).